The primary structure comprises 919 residues: 2-oxoadipate dehydrogenase complex component E1 (919 aa).

An N6-succinyllysine mark is found at lysine 183 and lysine 188. Residues 299-320 (GKTRGRQQSRQDGDYSPDNSAQ) form a disordered region. An N6-succinyllysine mark is found at lysine 800 and lysine 818.

The protein belongs to the alpha-ketoglutarate dehydrogenase family. The 2-oxoadipate dehydrogenase complex is composed of OADH (2-oxoadipate dehydrogenase; E1a), DLST (dihydrolipoamide succinyltransferase; E2) and DLD (dihydrolipoamide dehydrogenase; E3). E1a functional unit is a dimer. Interacts with DLST. It depends on thiamine diphosphate as a cofactor.

The protein resides in the mitochondrion. The enzyme catalyses N(6)-[(R)-lipoyl]-L-lysyl-[protein] + 2-oxoadipate + H(+) = N(6)-[(R)-S(8)-glutaryldihydrolipoyl]-L-lysyl-[protein] + CO2. It functions in the pathway amino-acid degradation. Its function is as follows. 2-oxoadipate dehydrogenase (E1a) component of the 2-oxoadipate dehydrogenase complex (OADHC). Participates in the first step, rate limiting for the overall conversion of 2-oxoadipate (alpha-ketoadipate) to glutaryl-CoA and CO(2) catalyzed by the whole OADHC. Catalyzes the irreversible decarboxylation of 2-oxoadipate via the thiamine diphosphate (ThDP) cofactor and subsequent transfer of the decarboxylated acyl intermediate on an oxidized dihydrolipoyl group that is covalently amidated to the E2 enzyme (dihydrolipoyllysine-residue succinyltransferase or DLST). Can catalyze the decarboxylation of 2-oxoglutarate in vitro, but at a much lower rate than 2-oxoadipate. Responsible for the last step of L-lysine, L-hydroxylysine and L-tryptophan catabolism with the common product being 2-oxoadipate. The protein is 2-oxoadipate dehydrogenase complex component E1 (DHTKD1) of Homo sapiens (Human).